The sequence spans 337 residues: 5-dehydro-2-deoxygluconokinase (337 aa).

Belongs to the carbohydrate kinase PfkB family.

The enzyme catalyses 5-dehydro-2-deoxy-D-gluconate + ATP = 6-phospho-5-dehydro-2-deoxy-D-gluconate + ADP + H(+). The protein operates within polyol metabolism; myo-inositol degradation into acetyl-CoA; acetyl-CoA from myo-inositol: step 5/7. In terms of biological role, catalyzes the phosphorylation of 5-dehydro-2-deoxy-D-gluconate (2-deoxy-5-keto-D-gluconate or DKG) to 6-phospho-5-dehydro-2-deoxy-D-gluconate (DKGP). In Geobacillus thermodenitrificans (strain NG80-2), this protein is 5-dehydro-2-deoxygluconokinase.